We begin with the raw amino-acid sequence, 291 residues long: Gamma-sarcoglycan (291 aa).

Residues 1–37 (MVREQYTTVTEGTHIERPENQHIYKIGIYGWRKRCLY) lie on the Cytoplasmic side of the membrane. Residues 38 to 58 (LFVLLLLAILVVNLALTIWIL) traverse the membrane as a helical; Signal-anchor for type II membrane protein segment. Over 59–291 (KVMWFSPIGM…TCEEHSHVCL (233 aa)) the chain is Extracellular. An N-linked (GlcNAc...) asparagine glycan is attached at N110. Intrachain disulfides connect C265/C290 and C267/C283.

Belongs to the sarcoglycan beta/delta/gamma/zeta family. As to quaternary structure, interacts with the syntrophin SNTA1 and FLNC. Cross-link to form 2 major subcomplexes: one consisting of SGCB, SGCD and SGCG and the other consisting of SGCB and SGCD. The association between SGCB and SGCG is particularly strong while SGCA is loosely associated with the other sarcoglycans. In terms of tissue distribution, most strongly expressed in skeletal and heart muscle. Also detected in proliferating myoblasts.

The protein resides in the cell membrane. It localises to the sarcolemma. The protein localises to the cytoplasm. Its subcellular location is the cytoskeleton. In terms of biological role, component of the sarcoglycan complex, a subcomplex of the dystrophin-glycoprotein complex which forms a link between the F-actin cytoskeleton and the extracellular matrix. This Mus musculus (Mouse) protein is Gamma-sarcoglycan (Sgcg).